Here is a 272-residue protein sequence, read N- to C-terminus: 1,4-dihydroxy-6-naphtoate synthase (272 aa).

Substrate-binding positions include 55–57 and 107–108; these read KLS and TA. H145 (proton acceptor) is an active-site residue.

The protein belongs to the MqnA/MqnD family. MqnD subfamily.

The catalysed reaction is cyclic dehypoxanthinylfutalosinate = 1,4-dihydroxy-6-naphthoate + dihydroxyacetone. The protein operates within quinol/quinone metabolism; menaquinone biosynthesis. Its function is as follows. Catalyzes the conversion of cyclic dehypoxanthine futalosine (cyclic DHFL) into 1,4-dihydroxy-6-naphthoate, a step in the biosynthesis of menaquinone (MK, vitamin K2). The protein is 1,4-dihydroxy-6-naphtoate synthase of Thermus thermophilus (strain ATCC 27634 / DSM 579 / HB8).